A 150-amino-acid chain; its full sequence is Small ribosomal subunit protein uS11z (150 aa).

A Phosphoserine modification is found at serine 19.

Belongs to the universal ribosomal protein uS11 family. As to quaternary structure, interacts with AAK6.

Its subcellular location is the cytoplasm. The protein is Small ribosomal subunit protein uS11z (RPS14A) of Arabidopsis thaliana (Mouse-ear cress).